Consider the following 185-residue polypeptide: Ribosome-recycling factor (185 aa).

The protein belongs to the RRF family.

The protein localises to the cytoplasm. Responsible for the release of ribosomes from messenger RNA at the termination of protein biosynthesis. May increase the efficiency of translation by recycling ribosomes from one round of translation to another. The sequence is that of Ribosome-recycling factor from Pseudomonas putida (strain ATCC 700007 / DSM 6899 / JCM 31910 / BCRC 17059 / LMG 24140 / F1).